The primary structure comprises 152 residues: Large ribosomal subunit protein bL9 (152 aa).

It belongs to the bacterial ribosomal protein bL9 family.

Binds to the 23S rRNA. The protein is Large ribosomal subunit protein bL9 of Gloeothece citriformis (strain PCC 7424) (Cyanothece sp. (strain PCC 7424)).